A 473-amino-acid chain; its full sequence is Dol-P-Glc:Glc(2)Man(9)GlcNAc(2)-PP-Dol alpha-1,2-glucosyltransferase (473 aa).

The Cytoplasmic portion of the chain corresponds to methionine 1–glycine 6. The chain crosses the membrane as a helical span at residues tyrosine 7 to phenylalanine 27. The Extracellular segment spans residues serine 28–threonine 64. A helical membrane pass occupies residues leucine 65 to tryptophan 85. At serine 86–arginine 97 the chain is on the cytoplasmic side. The chain crosses the membrane as a helical span at residues phenylalanine 98–valine 118. Topologically, residues glutamine 119–arginine 130 are extracellular. 2 helical membrane passes run valine 131 to tyrosine 151 and threonine 152 to histidine 172. At lysine 173–serine 175 the chain is on the extracellular side. The helical transmembrane segment at alanine 176–cysteine 196 threads the bilayer. Residues alanine 197–methionine 249 are Cytoplasmic-facing. The helical transmembrane segment at leucine 250 to valine 270 threads the bilayer. Residues asparagine 271 to glutamate 283 lie on the Extracellular side of the membrane. The chain crosses the membrane as a helical span at residues alanine 284–proline 304. The Cytoplasmic segment spans residues histidine 305 to arginine 323. Residues isoleucine 324 to histidine 344 traverse the membrane as a helical segment. Topologically, residues lysine 345–glutamate 367 are extracellular. The helical transmembrane segment at threonine 368 to leucine 388 threads the bilayer. Residues lysine 389–serine 392 are Cytoplasmic-facing. The chain crosses the membrane as a helical span at residues isoleucine 393 to leucine 413. Residues glutamate 414 to arginine 436 lie on the Extracellular side of the membrane. The chain crosses the membrane as a helical span at residues leucine 437 to asparagine 457. Over lysine 458–tryptophan 473 the chain is Cytoplasmic.

This sequence belongs to the ALG10 glucosyltransferase family.

The protein resides in the endoplasmic reticulum membrane. It catalyses the reaction an alpha-D-Glc-(1-&gt;3)-alpha-D-Glc-(1-&gt;3)-alpha-D-Man-(1-&gt;2)-alpha-D-Man-(1-&gt;2)-alpha-D-Man-(1-&gt;3)-[alpha-D-Man-(1-&gt;2)-alpha-D-Man-(1-&gt;3)-[alpha-D-Man-(1-&gt;2)-alpha-D-Man-(1-&gt;6)]-alpha-D-Man-(1-&gt;6)]-beta-D-Man-(1-&gt;4)-beta-D-GlcNAc-(1-&gt;4)-alpha-D-GlcNAc-diphospho-di-trans,poly-cis-dolichol + a di-trans,poly-cis-dolichyl beta-D-glucosyl phosphate = a alpha-D-Glc-(1-&gt;2)-alpha-D-Glc-(1-&gt;3)-alpha-D-Glc-(1-&gt;3)-alpha-D-Man-(1-&gt;2)-alpha-D-Man-(1-&gt;2)-alpha-D-Man-(1-&gt;3)-[alpha-D-Man-(1-&gt;2)-alpha-D-Man-(1-&gt;3)-[alpha-D-Man-(1-&gt;2)-alpha-D-Man-(1-&gt;6)]-alpha-D-Man-(1-&gt;6)]-beta-D-Man-(1-&gt;4)-beta-D-GlcNAc-(1-&gt;4)-alpha-D-GlcNAc-diphospho-di-trans,poly-cis-dolichol + a di-trans,poly-cis-dolichyl phosphate + H(+). It participates in protein modification; protein glycosylation. Its function is as follows. Dol-P-Glc:Glc(2)Man(9)GlcNAc(2)-PP-Dol alpha-1,2-glucosyltransferase that operates in the biosynthetic pathway of dolichol-linked oligosaccharides, the glycan precursors employed in protein asparagine (N)-glycosylation. The assembly of dolichol-linked oligosaccharides begins on the cytosolic side of the endoplasmic reticulum membrane and finishes in its lumen. The sequential addition of sugars to dolichol pyrophosphate produces dolichol-linked oligosaccharides containing fourteen sugars, including two GlcNAcs, nine mannoses and three glucoses. Once assembled, the oligosaccharide is transferred from the lipid to nascent proteins by oligosaccharyltransferases. In the lumen of the endoplasmic reticulum, adds the third and last glucose residue from dolichyl phosphate glucose (Dol-P-Glc) onto the lipid-linked oligosaccharide intermediate Glc(2)Man(9)GlcNAc(2)-PP-Dol to produce Glc(3)Man(9)GlcNAc(2)-PP-Dol. The protein is Dol-P-Glc:Glc(2)Man(9)GlcNAc(2)-PP-Dol alpha-1,2-glucosyltransferase of Homo sapiens (Human).